Here is a 255-residue protein sequence, read N- to C-terminus: Syntaxin-6 (255 aa).

N-acetylserine is present on Ser-2. Ser-2 is subject to Phosphoserine. The segment at 2 to 112 is interaction with BLTP3B; the sequence is SMEDPFFVVK…KDQMSASSVQ (111 aa). Positions 2 to 168 are required for interaction with VPS51; sequence SMEDPFFVVK…QAQQQLIVEQ (167 aa). Residues 2–234 lie on the Cytoplasmic side of the membrane; it reads SMEDPFFVVK…VSHMTSDRRQ (233 aa). The stretch at 41–74 forms a coiled coil; that stretch reads EEIDWTTNELRNNLRSIEWDLEDLDETISIVEAN. Residues Ser-129 and Ser-152 each carry the phosphoserine modification. A t-SNARE coiled-coil homology domain is found at 163–225; that stretch reads QLIVEQQDEQ…DNVMKKLAKV (63 aa). Residues 235–255 form a helical; Anchor for type IV membrane protein membrane-spanning segment; sequence WCAIAILFAVLLVVLTLFLVL.

The protein belongs to the syntaxin family. As to quaternary structure, identified in a complex containing STX6, STX12, VAMP4 and VTI1A. Binds EEA1. Interacts with VPS45A and GOPC. Interacts with MARCHF2; the interaction promotes MARCHF2-mediated ubiquitination and degradation of CFTR. Interacts with MARCHF3. Interacts with BLTP3B (via C-terminal coiled-coil domain). Interacts with BAIAP3; this interaction is increased in the presence of calcium. Interacts (via N-terminus) with VPS51. Interacts with VPS13B. Widely expressed, with relatively higher expression in brain, lung and kidney.

The protein resides in the golgi apparatus membrane. It is found in the golgi apparatus. Its subcellular location is the trans-Golgi network membrane. The protein localises to the recycling endosome membrane. Its function is as follows. SNARE promoting movement of transport vesicles to target membranes. Targets endosomes to the trans-Golgi network, and may therefore function in retrograde trafficking. Together with SNARE STX12, promotes movement of vesicles from endosomes to the cell membrane, and may therefore function in the endocytic recycling pathway. This chain is Syntaxin-6 (Stx6), found in Rattus norvegicus (Rat).